The sequence spans 372 residues: MLLKSPDKSPEKILKLFDEVYSKARIFYLLRTAIDLNLFEYLSSFKTAKELAEILDADLILMEYMLKILNELDLIESKVVSERIYYKNAEITNIYLKKDSNYSIINPIYSYFENIKNWENLADILKNKSNCSNMDVDNFFPKVVRRMADECKCWELQKVLNYMAKYEEFKNAKKLLDLAGGHGLYAIGFSMLNRNLKCYVFDLPNVIEETKKFIKKYNAKNVFTITGDFYKDDIGKGYDIIFCSYNPGGKNPKIAEKVYNALNEGGLFINKQFFPDKEEGIEDYINNMEWNFSKPEGLKKGKIRYTFEGDLNLNDYLKYLEDLGFKILEVVDMSELLGLDENSSSFRKSANPSDSLRFKDNSPAKMIVAKKL.

S-adenosyl-L-methionine-binding positions include Asp202 and 227–229 (GDF).

This sequence belongs to the class I-like SAM-binding methyltransferase superfamily. Cation-independent O-methyltransferase family.

This is an uncharacterized protein from Methanocaldococcus jannaschii (strain ATCC 43067 / DSM 2661 / JAL-1 / JCM 10045 / NBRC 100440) (Methanococcus jannaschii).